The primary structure comprises 163 residues: F-box protein At2g35280 (163 aa).

Residues 8–57 enclose the F-box domain; it reads ISRLEALPQDLLREIVAKIGVKSAEDYHNCILSCKELGASANDERVLKTL.

The polypeptide is F-box protein At2g35280 (Arabidopsis thaliana (Mouse-ear cress)).